A 379-amino-acid polypeptide reads, in one-letter code: Anhydro-N-acetylmuramic acid kinase (379 aa).

Residue 9–16 (GTSADGVD) participates in ATP binding.

It belongs to the anhydro-N-acetylmuramic acid kinase family.

It carries out the reaction 1,6-anhydro-N-acetyl-beta-muramate + ATP + H2O = N-acetyl-D-muramate 6-phosphate + ADP + H(+). It functions in the pathway amino-sugar metabolism; 1,6-anhydro-N-acetylmuramate degradation. Its pathway is cell wall biogenesis; peptidoglycan recycling. In terms of biological role, catalyzes the specific phosphorylation of 1,6-anhydro-N-acetylmuramic acid (anhMurNAc) with the simultaneous cleavage of the 1,6-anhydro ring, generating MurNAc-6-P. Is required for the utilization of anhMurNAc either imported from the medium or derived from its own cell wall murein, and thus plays a role in cell wall recycling. The chain is Anhydro-N-acetylmuramic acid kinase from Prochlorococcus marinus (strain MIT 9211).